A 375-amino-acid polypeptide reads, in one-letter code: Holliday junction branch migration complex subunit RuvB (375 aa).

The disordered stretch occupies residues 1-50 (MAIVSSKSPDPAERRSQAKTKPSVSEPQDSLVRPQAAPEESQRPEDQIRP). Positions 13-209 (ERRSQAKTKP…FGLVQRLRFY (197 aa)) are large ATPase domain (RuvB-L). The span at 19-28 (KTKPSVSEPQ) shows a compositional bias: polar residues. A compositionally biased stretch (basic and acidic residues) spans 40-49 (ESQRPEDQIR). Residues Ile-48, Arg-49, Gly-90, Lys-93, Thr-94, Thr-95, 156-158 (EDF), Arg-199, Tyr-209, and Arg-246 contribute to the ATP site. Thr-94 lines the Mg(2+) pocket. The segment at 210-280 (EVEALTDIVQ…IAATALELYN (71 aa)) is small ATPAse domain (RuvB-S). The tract at residues 283 to 375 (PCGLDWTDRR…LQQLLTEPET (93 aa)) is head domain (RuvB-H). DNA contacts are provided by Arg-338 and Arg-343.

Belongs to the RuvB family. As to quaternary structure, homohexamer. Forms an RuvA(8)-RuvB(12)-Holliday junction (HJ) complex. HJ DNA is sandwiched between 2 RuvA tetramers; dsDNA enters through RuvA and exits via RuvB. An RuvB hexamer assembles on each DNA strand where it exits the tetramer. Each RuvB hexamer is contacted by two RuvA subunits (via domain III) on 2 adjacent RuvB subunits; this complex drives branch migration. In the full resolvosome a probable DNA-RuvA(4)-RuvB(12)-RuvC(2) complex forms which resolves the HJ.

It is found in the cytoplasm. The enzyme catalyses ATP + H2O = ADP + phosphate + H(+). The RuvA-RuvB-RuvC complex processes Holliday junction (HJ) DNA during genetic recombination and DNA repair, while the RuvA-RuvB complex plays an important role in the rescue of blocked DNA replication forks via replication fork reversal (RFR). RuvA specifically binds to HJ cruciform DNA, conferring on it an open structure. The RuvB hexamer acts as an ATP-dependent pump, pulling dsDNA into and through the RuvAB complex. RuvB forms 2 homohexamers on either side of HJ DNA bound by 1 or 2 RuvA tetramers; 4 subunits per hexamer contact DNA at a time. Coordinated motions by a converter formed by DNA-disengaged RuvB subunits stimulates ATP hydrolysis and nucleotide exchange. Immobilization of the converter enables RuvB to convert the ATP-contained energy into a lever motion, pulling 2 nucleotides of DNA out of the RuvA tetramer per ATP hydrolyzed, thus driving DNA branch migration. The RuvB motors rotate together with the DNA substrate, which together with the progressing nucleotide cycle form the mechanistic basis for DNA recombination by continuous HJ branch migration. Branch migration allows RuvC to scan DNA until it finds its consensus sequence, where it cleaves and resolves cruciform DNA. The polypeptide is Holliday junction branch migration complex subunit RuvB (Synechococcus elongatus (strain ATCC 33912 / PCC 7942 / FACHB-805) (Anacystis nidulans R2)).